The chain runs to 344 residues: Arginine N-succinyltransferase (344 aa).

A succinyl-CoA-binding site is contributed by L125. H229 serves as the catalytic Proton donor.

It belongs to the arginine N-succinyltransferase family.

The catalysed reaction is succinyl-CoA + L-arginine = N(2)-succinyl-L-arginine + CoA + H(+). The protein operates within amino-acid degradation; L-arginine degradation via AST pathway; L-glutamate and succinate from L-arginine: step 1/5. Its function is as follows. Catalyzes the transfer of succinyl-CoA to arginine to produce N(2)-succinylarginine. In Escherichia coli O6:H1 (strain CFT073 / ATCC 700928 / UPEC), this protein is Arginine N-succinyltransferase.